A 475-amino-acid polypeptide reads, in one-letter code: Ribulose bisphosphate carboxylase large chain (475 aa).

Positions 1–2 (MS) are excised as a propeptide. Proline 3 is modified (N-acetylproline). Lysine 14 is subject to N6,N6,N6-trimethyllysine. 2 residues coordinate substrate: asparagine 123 and threonine 173. The Proton acceptor role is filled by lysine 175. Lysine 177 is a binding site for substrate. Lysine 201, aspartate 203, and glutamate 204 together coordinate Mg(2+). Lysine 201 bears the N6-carboxylysine mark. The Proton acceptor role is filled by histidine 294. Positions 295, 327, and 379 each coordinate substrate.

This sequence belongs to the RuBisCO large chain family. Type I subfamily. In terms of assembly, heterohexadecamer of 8 large chains and 8 small chains; disulfide-linked. The disulfide link is formed within the large subunit homodimers. Requires Mg(2+) as cofactor. In terms of processing, the disulfide bond which can form in the large chain dimeric partners within the hexadecamer appears to be associated with oxidative stress and protein turnover.

Its subcellular location is the plastid. The protein localises to the chloroplast. It carries out the reaction 2 (2R)-3-phosphoglycerate + 2 H(+) = D-ribulose 1,5-bisphosphate + CO2 + H2O. It catalyses the reaction D-ribulose 1,5-bisphosphate + O2 = 2-phosphoglycolate + (2R)-3-phosphoglycerate + 2 H(+). In terms of biological role, ruBisCO catalyzes two reactions: the carboxylation of D-ribulose 1,5-bisphosphate, the primary event in carbon dioxide fixation, as well as the oxidative fragmentation of the pentose substrate in the photorespiration process. Both reactions occur simultaneously and in competition at the same active site. This is Ribulose bisphosphate carboxylase large chain from Picea sitchensis (Sitka spruce).